A 602-amino-acid chain; its full sequence is Elongation factor 4 (602 aa).

The tr-type G domain occupies 7–189 (KRVRNFSIIA…AVVEKVPYPK (183 aa)). Residues 19-24 (DHGKST) and 136-139 (NKID) contribute to the GTP site.

The protein belongs to the TRAFAC class translation factor GTPase superfamily. Classic translation factor GTPase family. LepA subfamily.

Its subcellular location is the cell membrane. It catalyses the reaction GTP + H2O = GDP + phosphate + H(+). Required for accurate and efficient protein synthesis under certain stress conditions. May act as a fidelity factor of the translation reaction, by catalyzing a one-codon backward translocation of tRNAs on improperly translocated ribosomes. Back-translocation proceeds from a post-translocation (POST) complex to a pre-translocation (PRE) complex, thus giving elongation factor G a second chance to translocate the tRNAs correctly. Binds to ribosomes in a GTP-dependent manner. This is Elongation factor 4 from Clostridium tetani (strain Massachusetts / E88).